Consider the following 230-residue polypeptide: Triosephosphate isomerase (230 aa).

Position 9–11 (9–11 (NYK)) interacts with substrate. Catalysis depends on His-93, which acts as the Electrophile. Glu-141 serves as the catalytic Proton acceptor. Substrate-binding positions include Ile-146, Gly-180, and 201–202 (AS).

This sequence belongs to the triosephosphate isomerase family. As to quaternary structure, homotetramer; dimer of dimers.

It is found in the cytoplasm. The catalysed reaction is D-glyceraldehyde 3-phosphate = dihydroxyacetone phosphate. The protein operates within carbohydrate biosynthesis; gluconeogenesis. Its pathway is carbohydrate degradation; glycolysis; D-glyceraldehyde 3-phosphate from glycerone phosphate: step 1/1. In terms of biological role, involved in the gluconeogenesis. Catalyzes stereospecifically the conversion of dihydroxyacetone phosphate (DHAP) to D-glyceraldehyde-3-phosphate (G3P). In Sulfolobus acidocaldarius (strain ATCC 33909 / DSM 639 / JCM 8929 / NBRC 15157 / NCIMB 11770), this protein is Triosephosphate isomerase.